A 471-amino-acid polypeptide reads, in one-letter code: MLLSNVAVNRTVVHTQLVSGSRSALHALSRTSHSVPVTHTHQRRHIFSHKRRLSSSTLAIPFALSNTNSATTAPLQFLSNVSLCRVTPGTITTSAKATAPNLDKMSAEAATTAAQASASPVEDSFLKKAVSCQSETEREAVMAARAAKKALRETKETWWAPYVALTKPRLTVLVVLSAMSSYALTPEAVSLTNLLFLTVGTALCSGSANAINMGREPAYDSMMTRTRGRPVVRGAVTPNQAFTFAGITGTVGTAALYFGVNPTVAILGASNIALYGGLYTTLKRKHIINTWVGAVVGAIPPLMGWAASGGSLLHPGAWCLAGLLYAWQFPHFNALSYSIRDEYKKAGYVMTAWKNPGLNARVGLRYALLMFPLCVGLSYYNVTDWWFVLDSSVLNAWMAWWAFKFWQQENVNIALAAAGKQYSQNPFARKLFWGSVVHLPGVLLLAMIHKKGQWDWLFGPSEDEKKKTLSS.

The transit peptide at 1-60 directs the protein to the mitochondrion; sequence MLLSNVAVNRTVVHTQLVSGSRSALHALSRTSHSVPVTHTHQRRHIFSHKRRLSSSTLAI. The next 6 helical transmembrane spans lie at 188–208, 247–267, 287–307, 312–332, 368–388, and 430–450; these read AVSLTNLLFLTVGTALCSGSA, ITGTVGTAALYFGVNPTVAIL, IINTWVGAVVGAIPPLMGWAA, LLHPGAWCLAGLLYAWQFPHF, LLMFPLCVGLSYYNVTDWWFV, and KLFWGSVVHLPGVLLLAMIHK.

It belongs to the UbiA prenyltransferase family.

It is found in the mitochondrion membrane. It carries out the reaction heme b + (2E,6E)-farnesyl diphosphate + H2O = Fe(II)-heme o + diphosphate. Its function is as follows. Converts protoheme IX and farnesyl diphosphate to heme O. This chain is Protoheme IX farnesyltransferase, mitochondrial (COX10), found in Yarrowia lipolytica (strain CLIB 122 / E 150) (Yeast).